We begin with the raw amino-acid sequence, 1174 residues long: PR domain zinc finger protein 15 (1174 aa).

Positions 75–185 constitute an SET domain; that stretch reads SNLEIRRLDD…AGTELRVWYA (111 aa). The segment at 252 to 307 is disordered; sequence LPAGGQQHEAASEKEPDAPRMEPPTAAESKSIQSVMVTKEPKKKPRRGRKPKASKV. Residues 261–271 show a composition bias toward basic and acidic residues; it reads AASEKEPDAPR. The span at 292–304 shows a compositional bias: basic residues; that stretch reads PKKKPRRGRKPKA. 2 C2H2-type zinc fingers span residues 402–424 and 434–457; these read HQCG…VRSH and FKCE…SYKH. The segment at 468 to 486 adopts a C2H2-type 3; degenerate zinc-finger fold; the sequence is YRCGSCGKTFRMESALEFH. 2 consecutive C2H2-type zinc fingers follow at residues 495–517 and 522–544; these read FQCE…KKKH and FACE…QRRH. Residue Lys552 forms a Glycyl lysine isopeptide (Lys-Gly) (interchain with G-Cter in SUMO2) linkage. C2H2-type zinc fingers lie at residues 571–593 and 598–620; these read SGCP…LLTH and YTCE…IHVH. Positions 639–658 are disordered; it reads IGISSEENDDNSDESADSEP. A compositionally biased stretch (acidic residues) spans 644 to 655; it reads EENDDNSDESAD. 8 C2H2-type zinc fingers span residues 661-684, 689-711, 725-747, 753-775, 781-803, 809-831, 837-859, and 865-888; these read YSCK…MEVH, HGCS…MVIH, HPCE…KLIH, HACE…MRVH, YLCA…MKLH, YECK…YKRH, FMCE…KLIH, and WTCS…QLTH. Disordered regions lie at residues 957 to 1007 and 1147 to 1174; these read AEGK…GDET and LQPP…MYSY. A compositionally biased stretch (basic residues) spans 962-973; that stretch reads GKAAKRSHKRKQ. Positions 1154-1174 are enriched in low complexity; it reads AAPQQAVQPQVQNEQQQMYSY.

In terms of tissue distribution, expressed in embryonic stem cells (ESCs) (at protein level).

The protein localises to the nucleus. Functionally, sequence-specific DNA-binding transcriptional regulator. Plays a role as a molecular node in a transcriptional network regulating embryonic development and cell fate decision. Stimulates the expression of upstream key transcriptional activators and repressors of the Wnt/beta-catenin and MAPK/ERK pathways, respectively, that are essential for naive pluripotency and self-renewal maintenance of embryonic stem cells (ESCs). Specifically promotes SPRY1 and RSPO1 transcription activation through recognition and direct binding of a specific DNA sequence in their promoter regions. Also plays a role in induced pluripotent stem cells (iPSCs) reprogramming. Involved in early embryo development. This Mus musculus (Mouse) protein is PR domain zinc finger protein 15.